Here is a 286-residue protein sequence, read N- to C-terminus: Bifunctional protein FolD (286 aa).

NADP(+)-binding positions include 165-167 and Ser-190; that span reads GRS.

The protein belongs to the tetrahydrofolate dehydrogenase/cyclohydrolase family. Homodimer.

It catalyses the reaction (6R)-5,10-methylene-5,6,7,8-tetrahydrofolate + NADP(+) = (6R)-5,10-methenyltetrahydrofolate + NADPH. It carries out the reaction (6R)-5,10-methenyltetrahydrofolate + H2O = (6R)-10-formyltetrahydrofolate + H(+). It functions in the pathway one-carbon metabolism; tetrahydrofolate interconversion. Catalyzes the oxidation of 5,10-methylenetetrahydrofolate to 5,10-methenyltetrahydrofolate and then the hydrolysis of 5,10-methenyltetrahydrofolate to 10-formyltetrahydrofolate. This Staphylococcus epidermidis (strain ATCC 12228 / FDA PCI 1200) protein is Bifunctional protein FolD.